The chain runs to 187 residues: NAC domain-containing protein 104 (187 aa).

An NAC domain is found at 3–155 (LPPGFRFFPT…KWVICRVYEQ (153 aa)). A DNA-binding region spans residues 94-161 (VGIKKYLTFY…VYEQNCSEEE (68 aa)). The interval 118-142 (LPDSSSSSSRSSKRSSRASSSSHKP) is disordered.

Expressed in root xylem vessels. Expressed in stems, vascular tissue of cauline leaves and tracheary elements of sepals.

Its subcellular location is the nucleus. Its function is as follows. Probable transcription factor that influences tracheary elements and xylem development by negatively regulating secondary cell wall fiber synthesis and programmed cell death. This chain is NAC domain-containing protein 104, found in Arabidopsis thaliana (Mouse-ear cress).